Consider the following 213-residue polypeptide: Orotate phosphoribosyltransferase (213 aa).

Lysine 26 is a binding site for 5-phospho-alpha-D-ribose 1-diphosphate. An orotate-binding site is contributed by 34–35 (FF). 5-phospho-alpha-D-ribose 1-diphosphate is bound by residues 72–73 (YK), arginine 99, lysine 100, lysine 103, histidine 105, and 124–132 (DDVITAGTA). Orotate contacts are provided by threonine 128 and arginine 156.

It belongs to the purine/pyrimidine phosphoribosyltransferase family. PyrE subfamily. As to quaternary structure, homodimer. Mg(2+) is required as a cofactor.

It carries out the reaction orotidine 5'-phosphate + diphosphate = orotate + 5-phospho-alpha-D-ribose 1-diphosphate. The protein operates within pyrimidine metabolism; UMP biosynthesis via de novo pathway; UMP from orotate: step 1/2. Its function is as follows. Catalyzes the transfer of a ribosyl phosphate group from 5-phosphoribose 1-diphosphate to orotate, leading to the formation of orotidine monophosphate (OMP). In Shigella dysenteriae serotype 1 (strain Sd197), this protein is Orotate phosphoribosyltransferase.